The primary structure comprises 692 residues: Elongation factor G (692 aa).

The tr-type G domain occupies 8-283; sequence DRYRNIGIMA…AVVDFLPSPL (276 aa). GTP is bound by residues 17–24, 81–85, and 135–138; these read AHIDAGKT, DTPGH, and NKMD.

The protein belongs to the TRAFAC class translation factor GTPase superfamily. Classic translation factor GTPase family. EF-G/EF-2 subfamily.

It is found in the cytoplasm. Its function is as follows. Catalyzes the GTP-dependent ribosomal translocation step during translation elongation. During this step, the ribosome changes from the pre-translocational (PRE) to the post-translocational (POST) state as the newly formed A-site-bound peptidyl-tRNA and P-site-bound deacylated tRNA move to the P and E sites, respectively. Catalyzes the coordinated movement of the two tRNA molecules, the mRNA and conformational changes in the ribosome. This Rhodospirillum rubrum (strain ATCC 11170 / ATH 1.1.1 / DSM 467 / LMG 4362 / NCIMB 8255 / S1) protein is Elongation factor G.